The primary structure comprises 158 residues: NADH-quinone oxidoreductase subunit B (158 aa).

Positions 37, 38, 102, and 132 each coordinate [4Fe-4S] cluster.

This sequence belongs to the complex I 20 kDa subunit family. As to quaternary structure, NDH-1 is composed of 14 different subunits. Subunits NuoB, C, D, E, F, and G constitute the peripheral sector of the complex. [4Fe-4S] cluster serves as cofactor.

It localises to the cell inner membrane. The enzyme catalyses a quinone + NADH + 5 H(+)(in) = a quinol + NAD(+) + 4 H(+)(out). Its function is as follows. NDH-1 shuttles electrons from NADH, via FMN and iron-sulfur (Fe-S) centers, to quinones in the respiratory chain. The immediate electron acceptor for the enzyme in this species is believed to be ubiquinone. Couples the redox reaction to proton translocation (for every two electrons transferred, four hydrogen ions are translocated across the cytoplasmic membrane), and thus conserves the redox energy in a proton gradient. This is NADH-quinone oxidoreductase subunit B from Thiobacillus denitrificans (strain ATCC 25259 / T1).